The chain runs to 383 residues: Dual-specificity RNA methyltransferase RlmN (383 aa).

Glutamate 94 serves as the catalytic Proton acceptor. Residues 100–339 (DGDRATLCVS…VTVRRTRGDD (240 aa)) enclose the Radical SAM core domain. An intrachain disulfide couples cysteine 107 to cysteine 344. The [4Fe-4S] cluster site is built by cysteine 114, cysteine 118, and cysteine 121. S-adenosyl-L-methionine-binding positions include 168–169 (GE), serine 200, 222–224 (SLH), and asparagine 301. Cysteine 344 serves as the catalytic S-methylcysteine intermediate.

Belongs to the radical SAM superfamily. RlmN family. [4Fe-4S] cluster serves as cofactor.

The protein localises to the cytoplasm. It catalyses the reaction adenosine(2503) in 23S rRNA + 2 reduced [2Fe-2S]-[ferredoxin] + 2 S-adenosyl-L-methionine = 2-methyladenosine(2503) in 23S rRNA + 5'-deoxyadenosine + L-methionine + 2 oxidized [2Fe-2S]-[ferredoxin] + S-adenosyl-L-homocysteine. The catalysed reaction is adenosine(37) in tRNA + 2 reduced [2Fe-2S]-[ferredoxin] + 2 S-adenosyl-L-methionine = 2-methyladenosine(37) in tRNA + 5'-deoxyadenosine + L-methionine + 2 oxidized [2Fe-2S]-[ferredoxin] + S-adenosyl-L-homocysteine. Its function is as follows. Specifically methylates position 2 of adenine 2503 in 23S rRNA and position 2 of adenine 37 in tRNAs. m2A2503 modification seems to play a crucial role in the proofreading step occurring at the peptidyl transferase center and thus would serve to optimize ribosomal fidelity. The sequence is that of Dual-specificity RNA methyltransferase RlmN from Aliivibrio salmonicida (strain LFI1238) (Vibrio salmonicida (strain LFI1238)).